An 89-amino-acid chain; its full sequence is MIALEIYVSGNVQGVGFRYFTRRVARELGIKGYVKNLPDGRVYIYAVGEELTLDKFLSAVKSGPPLATVRGVEVKKAEIENYESFEVAY.

The Acylphosphatase-like domain maps to 3–89 (ALEIYVSGNV…ENYESFEVAY (87 aa)). Active-site residues include Arg-18 and Asn-36.

This sequence belongs to the acylphosphatase family.

The catalysed reaction is an acyl phosphate + H2O = a carboxylate + phosphate + H(+). This chain is Acylphosphatase (acyP), found in Archaeoglobus fulgidus (strain ATCC 49558 / DSM 4304 / JCM 9628 / NBRC 100126 / VC-16).